A 195-amino-acid polypeptide reads, in one-letter code: Thymidine kinase (195 aa).

ATP-binding positions include 9-16 and 87-90; these read STMNAGKS and DEAQ. Glu88 acts as the Proton acceptor in catalysis. Zn(2+)-binding residues include Cys145, Cys147, Cys182, and His185.

Belongs to the thymidine kinase family. Homotetramer.

Its subcellular location is the cytoplasm. The enzyme catalyses thymidine + ATP = dTMP + ADP + H(+). The protein is Thymidine kinase of Jannaschia sp. (strain CCS1).